A 369-amino-acid polypeptide reads, in one-letter code: S-(hydroxymethyl)glutathione dehydrogenase (369 aa).

Zn(2+) is bound by residues C40, H62, C92, C95, C98, C106, and C169.

Belongs to the zinc-containing alcohol dehydrogenase family. Class-III subfamily. In terms of assembly, homodimer. Requires Zn(2+) as cofactor.

The protein resides in the cytoplasm. It catalyses the reaction S-(hydroxymethyl)glutathione + NADP(+) = S-formylglutathione + NADPH + H(+). The enzyme catalyses S-(hydroxymethyl)glutathione + NAD(+) = S-formylglutathione + NADH + H(+). The catalysed reaction is a primary alcohol + NAD(+) = an aldehyde + NADH + H(+). It carries out the reaction a secondary alcohol + NAD(+) = a ketone + NADH + H(+). It catalyses the reaction S-nitrosoglutathione + NADH + H(+) = S-(hydroxysulfenamide)glutathione + NAD(+). In terms of biological role, has high formaldehyde dehydrogenase activity in the presence of glutathione and catalyzes the oxidation of normal alcohols in a reaction that is not GSH-dependent. In addition, hemithiolacetals other than those formed from GSH, including omega-thiol fatty acids, also are substrates. Also acts as a S-nitroso-glutathione reductase by catalyzing the NADH-dependent reduction of S-nitrosoglutathione. The protein is S-(hydroxymethyl)glutathione dehydrogenase (frmA) of Escherichia coli (strain SMS-3-5 / SECEC).